An 833-amino-acid chain; its full sequence is MHLLPRETDKLIVTTLGTLAQRRLARGLILNRAETIALISSQLQEFIRDGRHSVAELMDLGKKMLGRRHVRKGVPESIHTIQVEGTFPDGVFLVTVDDPISSDDGDLNNAFYGSFLPIPSADVFPAAPEPADTLLGALICRKEPIKINASRRRFKLEVKNAGDRPIQVGSHYHFLETNPALIFDRLLSYGYHLDIPAGTAVRFEPGEKKTVTMVEFGGKKIFHGGSGLASGSFDENLRETKVKEMVEKGGFGHKDQEKVEEGPTTEMNREVYASMFGPTTGDKIKLADMDLWIEVEKDYTVYGEECKFGGGKVLRDGGGQASGRHEHEVLDLVITNALIVDWNGIYKADIGVKNGIIVGIGKAGNPDMMDGVTDGMIVGSSTEVIAGEKLIITAGALDVHVHYICPQLMTEALASGITTVVGGGTGPADGSNATTCTSSSFYMQNMIKATDTVPLNFGFTGKGNDSGTNALRDVIEAGACGLKVHEDWGATPEVIDRALSIADEYDVQVNLHSDTLNESGYVESTLAAIKGRTIHSYHTEGAGGGHAPDIIVVCEYENVLPSSTNPTRPYAVNTLDEHLDMLMVCHHLDKSIPEDIAFADSRIRSETVAAEDVLQDTGAISMISSDCQAMGRIGEVITRTWRTAAKMKQFRGPLEGDEPTRDNNRVKRYVAKYTINPAITHGMSHLIGQVAVGCLADLVFWTAESFGARPEMILKGGVIAWAAMGDANASIPTVQPVIGRPMWGSQPEAAALNSIVWVSQASLDKDLVKRFNIKKRAEAVKNCRAIGKKDMKWNDSMPKMTVDPETYDVHADGVLCDVPPADKLPLTKRYFVY.

One can recognise a Urease domain in the interval 395–833 (GALDVHVHYI…LPLTKRYFVY (439 aa)). Ni(2+) is bound by residues H400 and H402. 2 residues coordinate urea: H402 and A433. K483 provides a ligand contact to Ni(2+). K483 is modified (N6-carboxylysine). Residues H485 and H512 each coordinate urea. Residues H512 and H538 each coordinate Ni(2+). H586 serves as the catalytic Proton donor. Position 626 (D626) interacts with Ni(2+). A629 contacts urea.

The protein in the C-terminal section; belongs to the metallo-dependent hydrolases superfamily. Urease alpha subunit family. In terms of assembly, homohexamer. It depends on Ni(2+) as a cofactor. In terms of processing, carboxylation allows a single lysine to coordinate two nickel ions.

It carries out the reaction urea + 2 H2O + H(+) = hydrogencarbonate + 2 NH4(+). The protein operates within nitrogen metabolism; urea degradation; CO(2) and NH(3) from urea (urease route): step 1/1. The urease accessory proteins URE4, URE6 and URE7 are required for urease activity, URE7 supplying nickel for the functional urease. Plays a nutritional role via nitrogen acquisition in the environment. Contributes to the central nervous system invasion by enhancing yeast sequestration within microcapillary beds (such as within the brain) during hematogenous spread, thereby facilitating blood-to-brain invasion by C.neoformans. Affects fitness within the mammalian phagosome, promoting non-lytic exocytosis while delaying intracellular replication and thus reducing phagolysosomal membrane damage, events that could facilitate cryptococcal dissemination when transported inside macrophages. Urease activity is also associated with the regulation of key intracellular metabolic pathways, including melanin biosynthesis, polyamine biosynthesis, as well as intracellular levels of proline and reactive oxygen species. The protein is Urease of Cryptococcus neoformans var. neoformans serotype D (strain B-3501A) (Filobasidiella neoformans).